The sequence spans 609 residues: Kelch-like protein 20 (609 aa).

One can recognise a BTB domain in the interval 68–135 (CDVVLVVGAK…AYTSQITVEE (68 aa)). Residues 170-272 (CLGIRAFADT…SPKFLVGTVG (103 aa)) form the BACK domain. 6 Kelch repeats span residues 319–365 (VLFA…VLDD), 367–413 (LYAV…VLGG), 414–460 (FLYA…VLGG), 462–507 (LYAV…VYQD), 509–554 (IYAV…VVNG), and 556–601 (LMAV…VIKM).

As to quaternary structure, component of the BCR(KLHL20) E3 ubiquitin ligase complex, at least composed of CUL3, KLHL20 and RBX1. Interacts with PDZ-RhoGEF/ARHGEF11, DAPK1, PML and CORO7. Interacts with F-actin. Interacts with IFN-gamma (IFNG). Interacts (via kelch repeats) with IVNS1ABP (via kelch repeats); this interaction blocks the assembly of CUL3-KLHL20 complex.

It localises to the cytoplasm. It is found in the perinuclear region. The protein localises to the nucleus. Its subcellular location is the golgi apparatus. The protein resides in the trans-Golgi network. It localises to the cell projection. It is found in the axon. The protein localises to the dendrite. The protein operates within protein modification; protein ubiquitination. Substrate-specific adapter of a BCR (BTB-CUL3-RBX1) E3 ubiquitin-protein ligase complex involved in interferon response and anterograde Golgi to endosome transport. The BCR(KLHL20) E3 ubiquitin ligase complex mediates the ubiquitination of DAPK1, leading to its degradation by the proteasome, thereby acting as a negative regulator of apoptosis. The BCR(KLHL20) E3 ubiquitin ligase complex also specifically mediates 'Lys-33'-linked ubiquitination. Involved in anterograde Golgi to endosome transport by mediating 'Lys-33'-linked ubiquitination of CORO7, promoting interaction between CORO7 and EPS15, thereby facilitating actin polymerization and post-Golgi trafficking. Also acts as a regulator of endothelial migration during angiogenesis by controlling the activation of Rho GTPases. The BCR(KLHL20) E3 ubiquitin ligase complex acts as a regulator of neurite outgrowth by mediating ubiquitination and degradation of PDZ-RhoGEF/ARHGEF11. The polypeptide is Kelch-like protein 20 (KLHL20) (Bos taurus (Bovine)).